The sequence spans 311 residues: tRNA-cytidine(32) 2-sulfurtransferase (311 aa).

A PP-loop motif motif is present at residues 47–52 (SGGKDS). Residues cysteine 122, cysteine 125, and cysteine 213 each contribute to the [4Fe-4S] cluster site.

Belongs to the TtcA family. Homodimer. It depends on Mg(2+) as a cofactor. [4Fe-4S] cluster is required as a cofactor.

It localises to the cytoplasm. It catalyses the reaction cytidine(32) in tRNA + S-sulfanyl-L-cysteinyl-[cysteine desulfurase] + AH2 + ATP = 2-thiocytidine(32) in tRNA + L-cysteinyl-[cysteine desulfurase] + A + AMP + diphosphate + H(+). It participates in tRNA modification. In terms of biological role, catalyzes the ATP-dependent 2-thiolation of cytidine in position 32 of tRNA, to form 2-thiocytidine (s(2)C32). The sulfur atoms are provided by the cysteine/cysteine desulfurase (IscS) system. The sequence is that of tRNA-cytidine(32) 2-sulfurtransferase from Escherichia coli O127:H6 (strain E2348/69 / EPEC).